Here is an 83-residue protein sequence, read N- to C-terminus: Short neurotoxin II (83 aa).

The signal sequence occupies residues Met1–Thr21. 4 disulfides stabilise this stretch: Cys24–Cys45, Cys38–Cys62, Cys64–Cys75, and Cys76–Cys81.

Belongs to the three-finger toxin family. Short-chain subfamily. Type I alpha-neurotoxin sub-subfamily. Expressed by the venom gland.

It localises to the secreted. In terms of biological role, binds to muscle nicotinic acetylcholine receptor (nAChR) and inhibit acetylcholine from binding to the receptor, thereby impairing neuromuscular transmission. This chain is Short neurotoxin II, found in Laticauda colubrina (Yellow-lipped sea krait).